The following is an 85-amino-acid chain: Large ribosomal subunit protein bL27 (85 aa).

A disordered region spans residues 1–22 (MAHKKGASSTRNGRDSNAQRLG). Residues 7–19 (ASSTRNGRDSNAQ) are compositionally biased toward polar residues.

The protein belongs to the bacterial ribosomal protein bL27 family.

This is Large ribosomal subunit protein bL27 (rpmA) from Streptomyces griseus.